Reading from the N-terminus, the 349-residue chain is MNPYVLTILLSSLGLGTVLTFASSHWLLAWMGLEINTLAIIPIMAQQHHPRAIEATTKYFLTQATAAAMILFASTTNAWLVGEWEIHQLSHPLATTTVMLALALKLGLAPVHFWLPEVLQGLELTTGLILSTWQKLAPFALMIQVAPTINSSLLVTIGLLSTLVGGWGGLNQTQLRKILAYLPIAHLGWMVLILQFAPSLTLLSLSLYIVMTSSAFLTLKTNNSLTINTLATSWTKSPTLAALTALVLLSLGGLPPLSGFMPKWLILQELTKQGLPLSATLAAMTALLSLYFYLRLCYALTLTIYPNTLTATAPWRLNFTMITLPLSITTIMALGLLPLTPAVTAMLAL.

The next 9 helical transmembrane spans lie at 3-23 (PYVL…TFAS), 66-86 (AAAM…EWEI), 98-118 (VMLA…LPEV), 139-159 (FALM…TIGL), 178-198 (ILAY…QFAP), 199-219 (SLTL…FLTL), 240-260 (LAAL…LSGF), 274-294 (GLPL…YFYL), and 319-339 (FTMI…LLPL).

Belongs to the complex I subunit 2 family.

Its subcellular location is the mitochondrion inner membrane. It carries out the reaction a ubiquinone + NADH + 5 H(+)(in) = a ubiquinol + NAD(+) + 4 H(+)(out). Functionally, core subunit of the mitochondrial membrane respiratory chain NADH dehydrogenase (Complex I) that is believed to belong to the minimal assembly required for catalysis. Complex I functions in the transfer of electrons from NADH to the respiratory chain. The immediate electron acceptor for the enzyme is believed to be ubiquinone. This Oncorhynchus mykiss (Rainbow trout) protein is NADH-ubiquinone oxidoreductase chain 2 (MT-ND2).